The primary structure comprises 258 residues: Imidazole glycerol phosphate synthase subunit HisF (258 aa).

Catalysis depends on residues Asp11 and Asp130.

This sequence belongs to the HisA/HisF family. In terms of assembly, heterodimer of HisH and HisF.

It is found in the cytoplasm. The enzyme catalyses 5-[(5-phospho-1-deoxy-D-ribulos-1-ylimino)methylamino]-1-(5-phospho-beta-D-ribosyl)imidazole-4-carboxamide + L-glutamine = D-erythro-1-(imidazol-4-yl)glycerol 3-phosphate + 5-amino-1-(5-phospho-beta-D-ribosyl)imidazole-4-carboxamide + L-glutamate + H(+). Its pathway is amino-acid biosynthesis; L-histidine biosynthesis; L-histidine from 5-phospho-alpha-D-ribose 1-diphosphate: step 5/9. In terms of biological role, IGPS catalyzes the conversion of PRFAR and glutamine to IGP, AICAR and glutamate. The HisF subunit catalyzes the cyclization activity that produces IGP and AICAR from PRFAR using the ammonia provided by the HisH subunit. The polypeptide is Imidazole glycerol phosphate synthase subunit HisF (Yersinia pseudotuberculosis serotype O:3 (strain YPIII)).